We begin with the raw amino-acid sequence, 101 residues long: Small ribosomal subunit protein uS14 (101 aa).

The disordered stretch occupies residues Ala44–Val74. The segment covering Arg61–Pro70 has biased composition (basic and acidic residues).

It belongs to the universal ribosomal protein uS14 family. As to quaternary structure, part of the 30S ribosomal subunit. Contacts proteins S3 and S10.

Its function is as follows. Binds 16S rRNA, required for the assembly of 30S particles and may also be responsible for determining the conformation of the 16S rRNA at the A site. This is Small ribosomal subunit protein uS14 from Cutibacterium acnes (strain DSM 16379 / KPA171202) (Propionibacterium acnes).